The chain runs to 872 residues: Alanine--tRNA ligase (872 aa).

Residues His-567, His-571, Cys-669, and His-673 each coordinate Zn(2+).

This sequence belongs to the class-II aminoacyl-tRNA synthetase family. It depends on Zn(2+) as a cofactor.

It is found in the cytoplasm. The enzyme catalyses tRNA(Ala) + L-alanine + ATP = L-alanyl-tRNA(Ala) + AMP + diphosphate. Functionally, catalyzes the attachment of alanine to tRNA(Ala) in a two-step reaction: alanine is first activated by ATP to form Ala-AMP and then transferred to the acceptor end of tRNA(Ala). Also edits incorrectly charged Ser-tRNA(Ala) and Gly-tRNA(Ala) via its editing domain. This Streptococcus agalactiae serotype Ia (strain ATCC 27591 / A909 / CDC SS700) protein is Alanine--tRNA ligase.